The following is a 236-amino-acid chain: Ureidoacrylate amidohydrolase RutB (236 aa).

Catalysis depends on D24, which acts as the Proton acceptor. K133 is an active-site residue. The active-site Nucleophile is the C166.

This sequence belongs to the isochorismatase family. RutB subfamily.

It carries out the reaction (Z)-3-ureidoacrylate + H2O + H(+) = (Z)-3-aminoacrylate + NH4(+) + CO2. The enzyme catalyses (Z)-3-ureidoacrylate + H2O = (Z)-3-aminoacrylate + carbamate + H(+). It catalyses the reaction (Z)-2-methylureidoacrylate + H2O + H(+) = (Z)-2-methylaminoacrylate + NH4(+) + CO2. Functionally, hydrolyzes ureidoacrylate to form aminoacrylate and carbamate. The carbamate hydrolyzes spontaneously, thereby releasing one of the nitrogen atoms of the pyrimidine ring as ammonia and one of its carbon atoms as CO2. The chain is Ureidoacrylate amidohydrolase RutB from Klebsiella pneumoniae (strain 342).